Consider the following 234-residue polypeptide: Phosphatidylcholine synthase (234 aa).

Topologically, residues 1–3 (MKN) are cytoplasmic. A helical transmembrane segment spans residues 4-24 (INLILAWLVHIFTASGLIVGL). Topologically, residues 25-26 (YS) are periplasmic. A helical membrane pass occupies residues 27–47 (IISIVNGNYSLLLKLTVIGLI). The Cytoplasmic portion of the chain corresponds to 48–75 (IDGIDGTMARKLKVKELIPEIDGTLLDN). A helical transmembrane segment spans residues 76-96 (ITDYINYTFIPVIFFYLGEFI). The Periplasmic portion of the chain corresponds to 97 to 98 (EE). Residues 99–116 (KYKVAICIGILLSSAYQF) form a helical membrane-spanning segment. At 117 to 126 (SRTDAKTNDN) the chain is on the cytoplasmic side. The chain crosses the membrane as a helical span at residues 127 to 147 (YFRGFPSLWNLFVILNIIFKM). The Periplasmic portion of the chain corresponds to 148-149 (EQ). A helical transmembrane segment spans residues 150–170 (ITNLITMSICIITSFIPIKFI). Over 171–180 (YPSKTKELRK) the chain is Cytoplasmic. Residues 181–201 (ITIPITIISCLIFVVSIFSEL) traverse the membrane as a helical segment. Over 202–207 (STTALK) the chain is Periplasmic. Residues 208 to 228 (MAKTVLILYFAYLTLASIYLT) traverse the membrane as a helical segment. Topologically, residues 229 to 234 (YKTRNR) are cytoplasmic.

The protein belongs to the CDP-alcohol phosphatidyltransferase class-I family. The cofactor is Mn(2+).

The protein localises to the cell inner membrane. It carries out the reaction a CDP-1,2-diacyl-sn-glycerol + choline = a 1,2-diacyl-sn-glycero-3-phosphocholine + CMP + H(+). Its function is as follows. Condenses choline with CDP-diglyceride to produce phosphatidylcholine and CMP. The chain is Phosphatidylcholine synthase from Borreliella burgdorferi (strain ATCC 35210 / DSM 4680 / CIP 102532 / B31) (Borrelia burgdorferi).